A 192-amino-acid chain; its full sequence is Elongation factor P (192 aa).

Belongs to the elongation factor P family.

The protein resides in the cytoplasm. Its pathway is protein biosynthesis; polypeptide chain elongation. Functionally, involved in peptide bond synthesis. Stimulates efficient translation and peptide-bond synthesis on native or reconstituted 70S ribosomes in vitro. Probably functions indirectly by altering the affinity of the ribosome for aminoacyl-tRNA, thus increasing their reactivity as acceptors for peptidyl transferase. This chain is Elongation factor P, found in Borrelia garinii subsp. bavariensis (strain ATCC BAA-2496 / DSM 23469 / PBi) (Borreliella bavariensis).